A 350-amino-acid chain; its full sequence is Eukaryotic translation initiation factor 3 subunit I (350 aa).

WD repeat units follow at residues 8–49 (GHER…GTLE), 51–89 (HQGV…CVFT), 91–135 (ESPS…ESLT), 149–188 (QDGA…AVNS), 198–240 (EKNV…KVYK), and 296–335 (GHFG…FDFY).

It belongs to the eIF-3 subunit I family. In terms of assembly, component of the eukaryotic translation initiation factor 3 (eIF-3) complex.

It localises to the cytoplasm. Component of the eukaryotic translation initiation factor 3 (eIF-3) complex, which is involved in protein synthesis of a specialized repertoire of mRNAs and, together with other initiation factors, stimulates binding of mRNA and methionyl-tRNAi to the 40S ribosome. The eIF-3 complex specifically targets and initiates translation of a subset of mRNAs involved in cell proliferation. The chain is Eukaryotic translation initiation factor 3 subunit I from Scheffersomyces stipitis (strain ATCC 58785 / CBS 6054 / NBRC 10063 / NRRL Y-11545) (Yeast).